The following is a 77-amino-acid chain: Cysteine-rich protein 1 (77 aa).

The 62-residue stretch at 2-63 (PKCPKCSKEV…HPCYAAMFGP (62 aa)) folds into the LIM zinc-binding domain. An N6-acetyllysine mark is found at lysine 9 and lysine 22. Arginine 68 bears the Omega-N-methylarginine mark.

In terms of biological role, seems to have a role in zinc absorption and may function as an intracellular zinc transport protein. This Bos taurus (Bovine) protein is Cysteine-rich protein 1 (CRIP1).